A 341-amino-acid polypeptide reads, in one-letter code: Aromatic amino acid aminotransferase (341 aa).

N6-(pyridoxal phosphate)lysine is present on K213.

Belongs to the class-II pyridoxal-phosphate-dependent aminotransferase family. Homodimer. It depends on pyridoxal 5'-phosphate as a cofactor.

It catalyses the reaction an aromatic L-alpha-amino acid + 2-oxoglutarate = an aromatic oxo-acid + L-glutamate. In terms of biological role, aminotransferase that catalyzes the conversion of aromatic amino acids and 2-oxoglutarate into corresponding aromatic oxo acids and L-glutamate. May catalyze the transamination reaction in phenylalanine biosynthesis. This is Aromatic amino acid aminotransferase from Corynebacterium glutamicum (strain ATCC 13032 / DSM 20300 / JCM 1318 / BCRC 11384 / CCUG 27702 / LMG 3730 / NBRC 12168 / NCIMB 10025 / NRRL B-2784 / 534).